Here is a 378-residue protein sequence, read N- to C-terminus: Flagellin E (378 aa).

Coiled coils occupy residues 98-139 (QSAN…KLLN) and 311-339 (MQNRFQHAISNLDNVHENLAASNSRIKDA).

This sequence belongs to the bacterial flagellin family. Heteromer of multiple flagellin subunits including FlaA, FlaB, FlaC, FlaD and FlaE.

It localises to the secreted. The protein resides in the bacterial flagellum. Flagellin is the subunit protein which polymerizes to form the filaments of bacterial flagella. FlaE is not essential for flagellar synthesis and motility. The chain is Flagellin E (flaE) from Vibrio cholerae serotype O1 (strain ATCC 39541 / Classical Ogawa 395 / O395).